Consider the following 377-residue polypeptide: Histidinol-phosphate aminotransferase (377 aa).

An N6-(pyridoxal phosphate)lysine modification is found at lysine 232.

Belongs to the class-II pyridoxal-phosphate-dependent aminotransferase family. Histidinol-phosphate aminotransferase subfamily. As to quaternary structure, homodimer. Requires pyridoxal 5'-phosphate as cofactor.

The catalysed reaction is L-histidinol phosphate + 2-oxoglutarate = 3-(imidazol-4-yl)-2-oxopropyl phosphate + L-glutamate. The protein operates within amino-acid biosynthesis; L-histidine biosynthesis; L-histidine from 5-phospho-alpha-D-ribose 1-diphosphate: step 7/9. This Mycobacterium sp. (strain KMS) protein is Histidinol-phosphate aminotransferase.